The following is a 529-amino-acid chain: Peptide chain release factor 3 (529 aa).

Residues 11–280 (AKRRTFAIIS…GLVEWAPAPM (270 aa)) enclose the tr-type G domain. GTP-binding positions include 20–27 (SHPDAGKT), 88–92 (DTPGH), and 142–145 (NKLD).

Belongs to the TRAFAC class translation factor GTPase superfamily. Classic translation factor GTPase family. PrfC subfamily.

It localises to the cytoplasm. In terms of biological role, increases the formation of ribosomal termination complexes and stimulates activities of RF-1 and RF-2. It binds guanine nucleotides and has strong preference for UGA stop codons. It may interact directly with the ribosome. The stimulation of RF-1 and RF-2 is significantly reduced by GTP and GDP, but not by GMP. In Citrobacter koseri (strain ATCC BAA-895 / CDC 4225-83 / SGSC4696), this protein is Peptide chain release factor 3.